Consider the following 338-residue polypeptide: RNA 3'-terminal phosphate cyclase (338 aa).

ATP-binding positions include Gln-103 and 283–287 (YLADQ). His-308 (tele-AMP-histidine intermediate) is an active-site residue.

The protein belongs to the RNA 3'-terminal cyclase family. Type 1 subfamily.

Its subcellular location is the cytoplasm. The enzyme catalyses a 3'-end 3'-phospho-ribonucleotide-RNA + ATP = a 3'-end 2',3'-cyclophospho-ribonucleotide-RNA + AMP + diphosphate. In terms of biological role, catalyzes the conversion of 3'-phosphate to a 2',3'-cyclic phosphodiester at the end of RNA. The mechanism of action of the enzyme occurs in 3 steps: (A) adenylation of the enzyme by ATP; (B) transfer of adenylate to an RNA-N3'P to produce RNA-N3'PP5'A; (C) and attack of the adjacent 2'-hydroxyl on the 3'-phosphorus in the diester linkage to produce the cyclic end product. The biological role of this enzyme is unknown but it is likely to function in some aspects of cellular RNA processing. This Shigella boydii serotype 18 (strain CDC 3083-94 / BS512) protein is RNA 3'-terminal phosphate cyclase.